The chain runs to 172 residues: Water stress-inducible protein Rab21 (172 aa).

Residues M1 to H172 are disordered. The stretch at H3 to G28 is one Type A repeat. Residues V21–Q65 are compositionally biased toward gly residues. A Type B repeat occupies R98–N115. The span at G124–M139 shows a compositional bias: gly residues. One copy of the Type A repeat lies at G125–T149. Residues T140–D153 show a composition bias toward low complexity. Basic and acidic residues predominate over residues T154–H172. Residues E156 to H172 form a Type B repeat.

Belongs to the plant dehydrin family.

It is found in the cytoplasm. The sequence is that of Water stress-inducible protein Rab21 (RAB21) from Oryza sativa subsp. indica (Rice).